The primary structure comprises 1551 residues: Dual oxidase 1 (1551 aa).

The signal sequence occupies residues 1-21 (MAVYSAVAWILLFGVLASLGA). Residues 22–596 (QNPVSWEVQR…YFKGSGFGFG (575 aa)) lie on the Extracellular side of the membrane. The interval 26–593 (SWEVQRFDGW…VRDYFKGSGF (568 aa)) is peroxidase-like; mediates peroxidase activity. 5 N-linked (GlcNAc...) asparagine glycosylation sites follow: Asn-94, Asn-342, Asn-354, Asn-461, and Asn-534. The chain crosses the membrane as a helical span at residues 597-617 (LTIGTLCCFPLVSLLSAWIVA). At 618–1044 (RLRMRNFKRL…KRFIENYRRH (427 aa)) the chain is on the cytoplasmic side. EF-hand domains follow at residues 815-850 (PQDM…FMKG), 851-886 (SPEE…FIEI), and 895-930 (QLAE…HDSD). Residues Asp-828, Asp-830, Asn-832, Tyr-834, Glu-839, Asp-864, Asp-866, Asn-868, and Glu-875 each contribute to the Ca(2+) site. Positions 956–1248 (YISQEKICPS…GSFALIQMPR (293 aa)) are interaction with TXNDC11. Residues 1045–1065 (IGCVAVFYTITGALFLERAYY) form a helical membrane-spanning segment. Residues 1066–1080 (YAFAAHHSGITDTTR) lie on the Extracellular side of the membrane. The chain crosses the membrane as a helical span at residues 1081–1101 (VGIILSRGTAASISFMFSYIL). A Ferric oxidoreductase domain is found at 1087–1269 (RGTAASISFM…YVGDKLVSLS (183 aa)). The Cytoplasmic segment spans residues 1102-1136 (LTMCRNLITFLRETFLNRYIPFDAAVDFHRFIAST). The chain crosses the membrane as a helical span at residues 1137 to 1157 (AIILTVLHSAGHVVNVYLFSI). Topologically, residues 1158–1188 (SPLSVLSCLFPDLFHDDGSEFPQKYYWWFFQ) are extracellular. The helical transmembrane segment at 1189 to 1209 (TVPGLTGVLLLLALAIMYVFA) threads the bilayer. The Cytoplasmic portion of the chain corresponds to 1210–1226 (SHHFRRRSFRGFWLTHH). Residues 1227 to 1247 (LYIFLYILLIIHGSFALIQMP) traverse the membrane as a helical segment. Position 1248 (Arg-1248) is a topological domain, extracellular. A helical membrane pass occupies residues 1249-1269 (FHIFFLVPAIIYVGDKLVSLS). One can recognise an FAD-binding FR-type domain in the interval 1270–1376 (RKKVEISVVK…DGPFGEGHQE (107 aa)). The Cytoplasmic segment spans residues 1270-1551 (RKKVEISVVK…THFSHHYENF (282 aa)).

It in the N-terminal section; belongs to the peroxidase family. In terms of assembly, interacts with TXNDC11, TPO and CYBA. Post-translationally, N-glycosylated. In terms of tissue distribution, expressed in thyrocytes (at protein level).

The protein localises to the apical cell membrane. It catalyses the reaction NADH + O2 + H(+) = H2O2 + NAD(+). It carries out the reaction NADPH + O2 + H(+) = H2O2 + NADP(+). It participates in hormone biosynthesis; thyroid hormone biosynthesis. Its activity is regulated as follows. The NADPH oxidase activity is calcium-dependent. Peroxidase activity is inhibited by aminobenzohydrazide. In terms of biological role, generates hydrogen peroxide which is required for the activity of thyroid peroxidase/TPO and lactoperoxidase/LPO. Plays a role in thyroid hormones synthesis and lactoperoxidase-mediated antimicrobial defense at the surface of mucosa. May have its own peroxidase activity through its N-terminal peroxidase-like domain. This chain is Dual oxidase 1 (Duox1), found in Rattus norvegicus (Rat).